The sequence spans 243 residues: 7-carboxy-7-deazaguanine synthase (243 aa).

Residues 9 to 11 (IMG) and R24 each bind substrate. Positions 15-243 (YIGRRFIFVR…IQMHKYLGML (229 aa)) constitute a Radical SAM core domain. Residues C28, C32, and C35 each contribute to the [4Fe-4S] cluster site. T84 contributes to the substrate binding site. An S-adenosyl-L-methionine-binding site is contributed by G86.

It belongs to the radical SAM superfamily. 7-carboxy-7-deazaguanine synthase family. Homodimer. The cofactor is [4Fe-4S] cluster. Requires S-adenosyl-L-methionine as cofactor. Mg(2+) is required as a cofactor.

It catalyses the reaction 6-carboxy-5,6,7,8-tetrahydropterin + H(+) = 7-carboxy-7-deazaguanine + NH4(+). Its pathway is purine metabolism; 7-cyano-7-deazaguanine biosynthesis. Functionally, catalyzes the complex heterocyclic radical-mediated conversion of 6-carboxy-5,6,7,8-tetrahydropterin (CPH4) to 7-carboxy-7-deazaguanine (CDG), a step common to the biosynthetic pathways of all 7-deazapurine-containing compounds. The chain is 7-carboxy-7-deazaguanine synthase from Methanocaldococcus jannaschii (strain ATCC 43067 / DSM 2661 / JAL-1 / JCM 10045 / NBRC 100440) (Methanococcus jannaschii).